We begin with the raw amino-acid sequence, 98 residues long: Integration host factor subunit alpha (98 aa).

This sequence belongs to the bacterial histone-like protein family. Heterodimer of an alpha and a beta chain.

In terms of biological role, this protein is one of the two subunits of integration host factor, a specific DNA-binding protein that functions in genetic recombination as well as in transcriptional and translational control. The chain is Integration host factor subunit alpha from Mannheimia succiniciproducens (strain KCTC 0769BP / MBEL55E).